A 127-amino-acid polypeptide reads, in one-letter code: Large ribosomal subunit protein eL22x (127 aa).

This sequence belongs to the eukaryotic ribosomal protein eL22 family.

This Arabidopsis thaliana (Mouse-ear cress) protein is Large ribosomal subunit protein eL22x (RPL22A).